A 275-amino-acid polypeptide reads, in one-letter code: Vitamin B12-binding protein (275 aa).

A signal peptide spans 1–19 (MMNKLCFALPLIFSDASFA). Positions 25-272 (RIISLAPHST…EVCEHFETVR (248 aa)) constitute a Fe/B12 periplasmic-binding domain. Cysteine 185 and cysteine 265 are joined by a disulfide.

The protein belongs to the BtuF family. In terms of assembly, the complex is composed of two ATP-binding proteins (BtuD), two transmembrane proteins (BtuC) and a solute-binding protein (BtuF).

Its subcellular location is the periplasm. Functionally, part of the ABC transporter complex BtuCDF involved in vitamin B12 import. Binds vitamin B12 and delivers it to the periplasmic surface of BtuC. This is Vitamin B12-binding protein from Vibrio campbellii (strain ATCC BAA-1116).